We begin with the raw amino-acid sequence, 121 residues long: T cell receptor alpha variable 23/delta variable 6 (121 aa).

The first 21 residues, 1–21, serve as a signal peptide directing secretion; sequence MDKILGASFLVLWLQLCWVSG. Residues 30–121 enclose the Ig-like domain; sequence QQVKQSPQSL…DSATYFCAAS (92 aa). A disulfide bridge links C51 with C118. The N-linked (GlcNAc...) asparagine glycan is linked to N95.

As to quaternary structure, alpha-beta TR is a heterodimer composed of an alpha and beta chain; disulfide-linked. The alpha-beta TR is associated with the transmembrane signaling CD3 coreceptor proteins to form the TR-CD3 (TcR or TCR). The assembly of alpha-beta TR heterodimers with CD3 occurs in the endoplasmic reticulum where a single alpha-beta TR heterodimer associates with one CD3D-CD3E heterodimer, one CD3G-CD3E heterodimer and one CD247 homodimer forming a stable octameric structure. CD3D-CD3E and CD3G-CD3E heterodimers preferentially associate with TR alpha and TR beta chains, respectively. The association of the CD247 homodimer is the last step of TcR assembly in the endoplasmic reticulum and is required for transport to the cell surface.

It is found in the cell membrane. Functionally, v region of the variable domain of T cell receptor (TR) alpha chain that participates in the antigen recognition. Alpha-beta T cell receptors are antigen specific receptors which are essential to the immune response and are present on the cell surface of T lymphocytes. Recognize peptide-major histocompatibility (MH) (pMH) complexes that are displayed by antigen presenting cells (APC), a prerequisite for efficient T cell adaptive immunity against pathogens. Binding of alpha-beta TR to pMH complex initiates TR-CD3 clustering on the cell surface and intracellular activation of LCK that phosphorylates the ITAM motifs of CD3G, CD3D, CD3E and CD247 enabling the recruitment of ZAP70. In turn ZAP70 phosphorylates LAT, which recruits numerous signaling molecules to form the LAT signalosome. The LAT signalosome propagates signal branching to three major signaling pathways, the calcium, the mitogen-activated protein kinase (MAPK) kinase and the nuclear factor NF-kappa-B (NF-kB) pathways, leading to the mobilization of transcription factors that are critical for gene expression and essential for T cell growth and differentiation. The T cell repertoire is generated in the thymus, by V-(D)-J rearrangement. This repertoire is then shaped by intrathymic selection events to generate a peripheral T cell pool of self-MH restricted, non-autoaggressive T cells. Post-thymic interaction of alpha-beta TR with the pMH complexes shapes TR structural and functional avidity. In Homo sapiens (Human), this protein is T cell receptor alpha variable 23/delta variable 6.